The primary structure comprises 577 residues: Guanine nucleotide-binding protein-like 3-like protein (577 aa).

A compositionally biased stretch (basic residues) spans 1–30 (MMKIRHKNKKPGKGSKGCKKPARQNGKKVT). The interval 1–75 (MMKIRHKNKK…VAREQERQRH (75 aa)) is disordered. The segment at 9–28 (KKPGKGSKGCKKPARQNGKK) is required for nucleolar localization. Positions 42–75 (GNDHASREAELKKKRVEEMREKQQVAREQERQRH) are enriched in basic and acidic residues. The stretch at 43–103 (NDHASREAEL…QKEEVLQELN (61 aa)) forms a coiled coil. The region spanning 118–304 (YKEFRKVVEY…LLDAPGIVPG (187 aa)) is the CP-type G domain. Residues 166 to 169 (NKID), 253 to 260 (GLPNVGKS), and 297 to 300 (DAPG) each bind GTP.

Belongs to the TRAFAC class YlqF/YawG GTPase family. Interacts with MDM2; this interaction, which occurs in the nucleoplasm, stabilizes MDM2. Indirectly interacts with TP53, via MDM2-binding. Interacts with TERF1; this interaction probably occurs in the nucleoplasm and is increased during mitosis, when the nucleolus is disassembled. This binding may promote TERF1 homodimerization. Interacts with TERT.

The protein resides in the nucleus. It is found in the nucleolus. Stabilizes TERF1 telomeric association by preventing TERF1 recruitment by PML. Stabilizes TERF1 protein by preventing its ubiquitination and hence proteasomal degradation. Does so by interfering with TERF1-binding to FBXO4 E3 ubiquitin-protein ligase. Required for cell proliferation. By stabilizing TRF1 protein during mitosis, promotes metaphase-to-anaphase transition. Stabilizes MDM2 protein by preventing its ubiquitination, and hence proteasomal degradation. By acting on MDM2, may affect TP53 activity. Required for normal processing of ribosomal pre-rRNA. Binds GTP. In Mus musculus (Mouse), this protein is Guanine nucleotide-binding protein-like 3-like protein (Gnl3l).